The following is a 545-amino-acid chain: CTP synthase (545 aa).

The segment at 1 to 266 (MKTKFIFITG…DQKIAIMLKL (266 aa)) is amidoligase domain. Residue Ser14 participates in CTP binding. Ser14 contacts UTP. ATP is bound by residues 15 to 20 (SLGKGL) and Asp72. Positions 72 and 140 each coordinate Mg(2+). CTP contacts are provided by residues 147-149 (DIE), 187-192 (KTKPTQ), and Lys223. Residues 187–192 (KTKPTQ) and Lys223 each bind UTP. Residues 291 to 545 (TIGIVGKYVD…IKASCENKNK (255 aa)) enclose the Glutamine amidotransferase type-1 domain. Gly353 contributes to the L-glutamine binding site. Residue Cys380 is the Nucleophile; for glutamine hydrolysis of the active site. L-glutamine contacts are provided by residues 381–384 (LGMQ), Glu404, and Arg472. Residues His518 and Glu520 contribute to the active site.

It belongs to the CTP synthase family. In terms of assembly, homotetramer.

The enzyme catalyses UTP + L-glutamine + ATP + H2O = CTP + L-glutamate + ADP + phosphate + 2 H(+). It catalyses the reaction L-glutamine + H2O = L-glutamate + NH4(+). It carries out the reaction UTP + NH4(+) + ATP = CTP + ADP + phosphate + 2 H(+). The protein operates within pyrimidine metabolism; CTP biosynthesis via de novo pathway; CTP from UDP: step 2/2. With respect to regulation, allosterically activated by GTP, when glutamine is the substrate; GTP has no effect on the reaction when ammonia is the substrate. The allosteric effector GTP functions by stabilizing the protein conformation that binds the tetrahedral intermediate(s) formed during glutamine hydrolysis. Inhibited by the product CTP, via allosteric rather than competitive inhibition. Catalyzes the ATP-dependent amination of UTP to CTP with either L-glutamine or ammonia as the source of nitrogen. Regulates intracellular CTP levels through interactions with the four ribonucleotide triphosphates. In Maridesulfovibrio salexigens (strain ATCC 14822 / DSM 2638 / NCIMB 8403 / VKM B-1763) (Desulfovibrio salexigens), this protein is CTP synthase.